Consider the following 362-residue polypeptide: Very-long-chain (3R)-3-hydroxyacyl-CoA dehydratase 3 (362 aa).

Met-1 carries the post-translational modification N-acetylmethionine. The Cytoplasmic portion of the chain corresponds to 1 to 149 (MENQVLTPHV…ETLTSLKKGY (149 aa)). Residues 5–94 (VLTPHVYWAQ…KESQWWERLT (90 aa)) enclose the CS domain. Thr-7 is modified (phosphothreonine). Residues 111–136 (LDESDAEMELRAKEEEQLNKLRLESQ) adopt a coiled-coil conformation. Ser-114 and Ser-135 each carry phosphoserine. Residues 150 to 170 (LFMYNLVQFLGFSWIFVNMTV) form a helical membrane-spanning segment. Topologically, residues 171-189 (RFFILGKESFYDTFHTVAD) are lumenal. Residues 190 to 210 (MMYFCQMLAAVESINAAIGVT) traverse the membrane as a helical segment. Over 211 to 212 (KS) the chain is Cytoplasmic. The helical transmembrane segment at 213–233 (PVVPSLFQLLGRNFILFIIFG) threads the bilayer. Residues 234–242 (TMEEMQNKA) are Lumenal-facing. Residues 243 to 263 (VVFFVFYIWSTVEIFRYPFYM) traverse the membrane as a helical segment. At 264–280 (LSCIDMDWKVLTWLRYT) the chain is on the cytoplasmic side. A helical membrane pass occupies residues 281–301 (VWIPLYPMGCLAEAVSVIQSI). Active-site residues include Tyr-286 and Glu-293. The Lumenal segment spans residues 302–325 (PVFNETGRFSFTLPYPVKIKVRFS). A helical transmembrane segment spans residues 326–346 (FFLQIYLILLFLGLYVNFRYL). Residues 347 to 362 (YKQRRRRFGQKKKKIH) lie on the Cytoplasmic side of the membrane.

Belongs to the very long-chain fatty acids dehydratase HACD family. As to quaternary structure, may interact with enzymes of the ELO family (including ELOVL1); with those enzymes that mediate condensation, the first of the four steps of the reaction cycle responsible for fatty acids elongation, may be part of a larger fatty acids elongase complex. Interacts with RAC1. Associates with internalized insulin receptor/INSR complexes on Golgi/endosomal membranes; HACD3/PTPLAD1 together with ATIC and PRKAA2/AMPK2 is proposed to be part of a signaling network regulating INSR autophosphorylation and endocytosis.

Its subcellular location is the endoplasmic reticulum membrane. It catalyses the reaction a very-long-chain (3R)-3-hydroxyacyl-CoA = a very-long-chain (2E)-enoyl-CoA + H2O. It carries out the reaction (3R)-hydroxyhexadecanoyl-CoA = (2E)-hexadecenoyl-CoA + H2O. It participates in lipid metabolism; fatty acid biosynthesis. In terms of biological role, catalyzes the third of the four reactions of the long-chain fatty acids elongation cycle. This endoplasmic reticulum-bound enzymatic process, allows the addition of two carbons to the chain of long- and very long-chain fatty acids/VLCFAs per cycle. This enzyme catalyzes the dehydration of the 3-hydroxyacyl-CoA intermediate into trans-2,3-enoyl-CoA, within each cycle of fatty acid elongation. Thereby, it participates in the production of VLCFAs of different chain lengths that are involved in multiple biological processes as precursors of membrane lipids and lipid mediators. Involved in Rac1-signaling pathways leading to the modulation of gene expression. Promotes insulin receptor/INSR autophosphorylation and is involved in INSR internalization. The polypeptide is Very-long-chain (3R)-3-hydroxyacyl-CoA dehydratase 3 (Bos taurus (Bovine)).